Reading from the N-terminus, the 951-residue chain is Translation initiation factor IF-2 (951 aa).

Disordered regions lie at residues alanine 58 to isoleucine 255 and aspartate 305 to serine 329. Residues alanine 101 to alanine 170 show a composition bias toward low complexity. The span at proline 171 to arginine 216 shows a compositional bias: pro residues. Positions proline 217–glutamine 234 are enriched in low complexity. Residues isoleucine 450–lysine 619 form the tr-type G domain. The interval glycine 459–threonine 466 is G1. GTP is bound at residue glycine 459 to threonine 466. The G2 stretch occupies residues glycine 484 to histidine 488. Positions aspartate 505–glycine 508 are G3. GTP is bound by residues aspartate 505 to histidine 509 and asparagine 559 to aspartate 562. The tract at residues asparagine 559 to aspartate 562 is G4. The segment at serine 595–arginine 597 is G5.

This sequence belongs to the TRAFAC class translation factor GTPase superfamily. Classic translation factor GTPase family. IF-2 subfamily.

The protein localises to the cytoplasm. In terms of biological role, one of the essential components for the initiation of protein synthesis. Protects formylmethionyl-tRNA from spontaneous hydrolysis and promotes its binding to the 30S ribosomal subunits. Also involved in the hydrolysis of GTP during the formation of the 70S ribosomal complex. The chain is Translation initiation factor IF-2 from Anaeromyxobacter dehalogenans (strain 2CP-1 / ATCC BAA-258).